Consider the following 397-residue polypeptide: Serpin B10 (397 aa).

The Nuclear localization signal motif lies at 74 to 77; sequence KKRK.

Belongs to the serpin family. Ov-serpin subfamily.

It is found in the nucleus. The protein resides in the cytoplasm. Protease inhibitor that may play a role in the regulation of protease activities during hematopoiesis and apoptosis induced by TNF. May regulate protease activities in the cytoplasm and in the nucleus. In Rhinolophus ferrumequinum (Greater horseshoe bat), this protein is Serpin B10 (SERPINB10).